Here is a 439-residue protein sequence, read N- to C-terminus: Xylose isomerase (439 aa).

Residues H99 and D102 contribute to the active site. The Mg(2+) site is built by E230, E266, H269, D294, D305, D307, and D337.

This sequence belongs to the xylose isomerase family. As to quaternary structure, homotetramer. It depends on Mg(2+) as a cofactor.

The protein resides in the cytoplasm. The catalysed reaction is alpha-D-xylose = alpha-D-xylulofuranose. The sequence is that of Xylose isomerase from Oceanobacillus iheyensis (strain DSM 14371 / CIP 107618 / JCM 11309 / KCTC 3954 / HTE831).